The sequence spans 912 residues: MNPINSFIFPDIPKDLGKILMKDDQQLIVVGIIGKSSTPDCNKLVGFNLLTIHPALTDTDPRDGRVKFYFENDGKILYLHFETTFDQHVMADLLAKAVQTGIQDNFINFNSTVRTRFARVLLFAIQVCHMIVLVEPSSVFDTSYLSIFKSLKIIREKYVLKFLPKLLKSSNLGNYMGKEARLCSPRFIFFFEGTSNIKPEDVEKLDGLECSVEEEIYKMLRNEFIITNNSAMSLFSIPRSKKFVFYNSDKRAKSNPLADSIDLLMKYLNKPAGGQNDDDEDLMSRLRPYDGYGMSAWSVGKSKRAEKKERSILALLKEHVAEAFEHGFDDSASKYRGRGHFVIPSFKTWYEGFKLLHKIFIDNPSNSSYETNDPDYKAFLQNFHKIIDIDERFFAEICEHGLELAMVNYKDMLPHHYSSTFHEKKYEQAHELFTRYARGPEVERHEQKLKDYCDSIWLNGKQQCEYPSLRGNPCALGKHKVKDPTEHSSGVIFVSACNCGRTQGHREDPYTIRQGNYDFYQIIAKSCSSCNVLERVKFPVFEPSSNDFRAAEFINKNLSNLMSFEHSNRTPDASTHPPMTNENSPHLSGSQKSQDSASNLTFSMDEKRDEENKSQKFGTQGEDEDETLEQETVNEIVIKVGEHSEDKAILRQPSTTEYLPGMLHAASPAGLLPQFPSWSLVCLGPSSIYTHNSGIPEHVQSGFLSGANFLLPWDVSVRLEHAQSWAASYEKIRNRKKNTSQPKSSESSNTFTLKIFLGVEYECLRGHRFIMSGPDTVLRGGSGSIVRDSGSKVVFNDMPIYFPCPCRSSNIAQLMRVHVVTPKAPVNVIVEPKVRILQGTTQNCLTFTTGLTEPIKLSQSAYWILRLPFIYEGDSGPLMPPAGVTVANAATHGVLMAGMFGIRESEISEELL.

The segment at 565–630 (EHSNRTPDAS…GEDEDETLEQ (66 aa)) is disordered. The span at 570–602 (TPDASTHPPMTNENSPHLSGSQKSQDSASNLTF) shows a compositional bias: polar residues. Basic and acidic residues predominate over residues 604–614 (MDEKRDEENKS).

The protein belongs to the SMG8 family.

Functionally, involved in nonsense-mediated decay (NMD) of mRNAs containing premature stop codons. Probable component of kinase complex containing SMG1 and recruited to stalled ribosomes. The protein is Nonsense-mediated mRNA decay factor SMG8 of Culex quinquefasciatus (Southern house mosquito).